A 498-amino-acid chain; its full sequence is Probable malate:quinone oxidoreductase (498 aa).

Belongs to the MQO family. FAD is required as a cofactor.

The catalysed reaction is (S)-malate + a quinone = a quinol + oxaloacetate. The protein operates within carbohydrate metabolism; tricarboxylic acid cycle; oxaloacetate from (S)-malate (quinone route): step 1/1. The protein is Probable malate:quinone oxidoreductase of Prochlorococcus marinus (strain MIT 9312).